A 78-amino-acid chain; its full sequence is ATP synthase subunit c (78 aa).

2 helical membrane-spanning segments follow: residues 12 to 32 (IGAGLACTGMGGAAVGVGHVV) and 54 to 74 (FIGIAFAEALGIFSFLVALLL).

It belongs to the ATPase C chain family. F-type ATPases have 2 components, F(1) - the catalytic core - and F(0) - the membrane proton channel. F(1) has five subunits: alpha(3), beta(3), gamma(1), delta(1), epsilon(1). F(0) has four main subunits: a(1), b(1), b'(1) and c(10-14). The alpha and beta chains form an alternating ring which encloses part of the gamma chain. F(1) is attached to F(0) by a central stalk formed by the gamma and epsilon chains, while a peripheral stalk is formed by the delta, b and b' chains.

The protein localises to the cellular chromatophore membrane. Functionally, f(1)F(0) ATP synthase produces ATP from ADP in the presence of a proton or sodium gradient. F-type ATPases consist of two structural domains, F(1) containing the extramembraneous catalytic core and F(0) containing the membrane proton channel, linked together by a central stalk and a peripheral stalk. During catalysis, ATP synthesis in the catalytic domain of F(1) is coupled via a rotary mechanism of the central stalk subunits to proton translocation. In terms of biological role, key component of the F(0) channel; it plays a direct role in translocation across the membrane. A homomeric c-ring of between 10-14 subunits forms the central stalk rotor element with the F(1) delta and epsilon subunits. This is ATP synthase subunit c from Rhodobacter capsulatus (Rhodopseudomonas capsulata).